Here is a 151-residue protein sequence, read N- to C-terminus: 3-dehydroquinate dehydratase 1 (151 aa).

Tyr23 serves as the catalytic Proton acceptor. Asn75, His81, and Asp88 together coordinate substrate. The Proton donor role is filled by His101. Residues 102 to 103 (LS) and Arg112 each bind substrate.

This sequence belongs to the type-II 3-dehydroquinase family. As to quaternary structure, homododecamer.

The catalysed reaction is 3-dehydroquinate = 3-dehydroshikimate + H2O. Its pathway is metabolic intermediate biosynthesis; chorismate biosynthesis; chorismate from D-erythrose 4-phosphate and phosphoenolpyruvate: step 3/7. Catalyzes a trans-dehydration via an enolate intermediate. The protein is 3-dehydroquinate dehydratase 1 (aroQ1) of Pseudomonas putida (strain ATCC 47054 / DSM 6125 / CFBP 8728 / NCIMB 11950 / KT2440).